A 156-amino-acid polypeptide reads, in one-letter code: Small ribosomal subunit protein uS7 (156 aa).

It belongs to the universal ribosomal protein uS7 family. Part of the 30S ribosomal subunit. Contacts proteins S9 and S11.

One of the primary rRNA binding proteins, it binds directly to 16S rRNA where it nucleates assembly of the head domain of the 30S subunit. Is located at the subunit interface close to the decoding center, probably blocks exit of the E-site tRNA. This Carsonella ruddii (strain PV) protein is Small ribosomal subunit protein uS7.